The following is a 157-amino-acid chain: 6,7-dimethyl-8-ribityllumazine synthase (157 aa).

Residues phenylalanine 22, 57 to 59, and 81 to 83 contribute to the 5-amino-6-(D-ribitylamino)uracil site; these read AYE and TVI. Residue 86–87 participates in (2S)-2-hydroxy-3-oxobutyl phosphate binding; sequence GT. Catalysis depends on histidine 89, which acts as the Proton donor. Phenylalanine 114 serves as a coordination point for 5-amino-6-(D-ribitylamino)uracil. Residue arginine 128 coordinates (2S)-2-hydroxy-3-oxobutyl phosphate.

This sequence belongs to the DMRL synthase family. In terms of assembly, forms an icosahedral capsid composed of 60 subunits, arranged as a dodecamer of pentamers.

It carries out the reaction (2S)-2-hydroxy-3-oxobutyl phosphate + 5-amino-6-(D-ribitylamino)uracil = 6,7-dimethyl-8-(1-D-ribityl)lumazine + phosphate + 2 H2O + H(+). It participates in cofactor biosynthesis; riboflavin biosynthesis; riboflavin from 2-hydroxy-3-oxobutyl phosphate and 5-amino-6-(D-ribitylamino)uracil: step 1/2. Functionally, catalyzes the formation of 6,7-dimethyl-8-ribityllumazine by condensation of 5-amino-6-(D-ribitylamino)uracil with 3,4-dihydroxy-2-butanone 4-phosphate. This is the penultimate step in the biosynthesis of riboflavin. This Pasteurella multocida (strain Pm70) protein is 6,7-dimethyl-8-ribityllumazine synthase.